The primary structure comprises 331 residues: ADP,ATP carrier protein 1, mitochondrial (331 aa).

Solcar repeat units lie at residues 29–122 (KNFA…FKRM), 134–226 (KWFG…LKPV), and 238–320 (ASFA…LQIL). 5 helical membrane passes run 31–58 (FAID…VKLL), 99–123 (TANV…KRMF), 132–152 (YWKW…SSLF), 202–223 (FNIS…YDSL), and 237–257 (FASF…SYPI). The ADP site is built by arginine 104 and lysine 116. Arginine 261 lines the ADP pocket. The tract at residues 261-266 (RRRMMM) is important for transport activity. The short motif at 261-266 (RRRMMM) is the Nucleotide carrier signature motif element. A helical transmembrane segment spans residues 297–317 (AGANILRAIAGAGVLSGYDQL).

This sequence belongs to the mitochondrial carrier (TC 2.A.29) family. As to quaternary structure, monomer.

It localises to the mitochondrion inner membrane. It carries out the reaction ADP(in) + ATP(out) = ADP(out) + ATP(in). The matrix-open state (m-state) is inhibited by the membrane-permeable bongkrekic acid (BKA). The cytoplasmic-open state (c-state) is inhibited by the membrane-impermeable toxic inhibitor carboxyatractyloside (CATR). In terms of biological role, ADP:ATP antiporter that mediates import of ADP into the mitochondrial matrix for ATP synthesis, and export of ATP out to fuel the cell. Cycles between the cytoplasmic-open state (c-state) and the matrix-open state (m-state): operates by the alternating access mechanism with a single substrate-binding site intermittently exposed to either the cytosolic (c-state) or matrix (m-state) side of the inner mitochondrial membrane. This is ADP,ATP carrier protein 1, mitochondrial (ANT-G1) from Triticum aestivum (Wheat).